We begin with the raw amino-acid sequence, 351 residues long: Flagellin (351 aa).

It belongs to the bacterial flagellin family.

It is found in the secreted. Its subcellular location is the bacterial flagellum. Functionally, flagellin is the subunit protein which polymerizes to form the filaments of bacterial flagella. This Serratia marcescens protein is Flagellin (fliC).